The sequence spans 376 residues: Putative transcription factor egl-18 (376 aa).

Disordered stretches follow at residues 1–33 (MSIS…CSGC), 65–122 (NNEL…LPDF), 148–197 (MVQQ…SDIP), and 240–264 (ATPS…PNAA). Residues 9-27 (TRPESAEQQHHEVLQRPSD) are compositionally biased toward basic and acidic residues. Composition is skewed to low complexity over residues 68–89 (LKSS…RSSP) and 165–175 (QQSVSPPQSKS). The segment covering 176 to 195 (VKIEDPMDQDVKQEESERSD) has biased composition (basic and acidic residues). Positions 241–250 (TPSSQSQDSS) are enriched in polar residues. Residues 266–290 (CSNCRTDKTTAWRRDAEGKLVCNPC) form a GATA-type zinc finger.

As to expression, expressed in differentiated seam cells. Expressed in the head and trunk.

The protein localises to the nucleus. In terms of biological role, probable transcription factor. Involved in embryonic development and in vulval development in larvae, acting redundantly, at least in part, with elt-6. Perhaps acting together with elt-6, may form a positive feedback loop to initiate and maintain lin-39 gene expression to ensure proper vulval precursor cell (VPC) fate specification. Together with elt-6, acts as a downstream target of the Wnt/beta-catenin asymmetry pathway, required to adopt or maintain the seam cell fate. Required in seam cells, acting redundantly with elt-6, to promote production of alae, expression of several seam-specific genes and maintenance of seam cells in an unfused state. Plays a role in longevity. May form a transcriptional circuit with GATA factors elt-3 and elt-6. In Caenorhabditis elegans, this protein is Putative transcription factor egl-18.